A 254-amino-acid polypeptide reads, in one-letter code: Cytochrome c oxidase subunit 2 (254 aa).

Over 12–38 (DAPEPWQICYQDSATKIMSGIDKLTGE) the chain is Mitochondrial intermembrane. The chain crosses the membrane as a helical span at residues 39–59 (IFYYETLLLIIVGWVLISAII). Residues 60-73 (KYTKTELSYKYFNH) are Mitochondrial matrix-facing. Residues 74–94 (GTLIEILWTCSPAFILIAISF) traverse the membrane as a helical segment. Residues 95–248 (PSFKLLYLMD…KYLEWLNIHL (154 aa)) lie on the Mitochondrial intermembrane side of the membrane. Positions 182, 217, 219, 221, 225, and 228 each coordinate Cu cation. Glutamate 219 provides a ligand contact to Mg(2+).

It belongs to the cytochrome c oxidase subunit 2 family. Component of the cytochrome c oxidase (complex IV, CIV), a multisubunit enzyme composed of a catalytic core of 3 subunits and several supernumerary subunits. The complex exists as a monomer or a dimer and forms supercomplexes (SCs) in the inner mitochondrial membrane with ubiquinol-cytochrome c oxidoreductase (cytochrome b-c1 complex, complex III, CIII). The cofactor is Cu cation.

The protein localises to the mitochondrion inner membrane. The catalysed reaction is 4 Fe(II)-[cytochrome c] + O2 + 8 H(+)(in) = 4 Fe(III)-[cytochrome c] + 2 H2O + 4 H(+)(out). Component of the cytochrome c oxidase, the last enzyme in the mitochondrial electron transport chain which drives oxidative phosphorylation. The respiratory chain contains 3 multisubunit complexes succinate dehydrogenase (complex II, CII), ubiquinol-cytochrome c oxidoreductase (cytochrome b-c1 complex, complex III, CIII) and cytochrome c oxidase (complex IV, CIV), that cooperate to transfer electrons derived from NADH and succinate to molecular oxygen, creating an electrochemical gradient over the inner membrane that drives transmembrane transport and the ATP synthase. Cytochrome c oxidase is the component of the respiratory chain that catalyzes the reduction of oxygen to water. Electrons originating from reduced cytochrome c in the intermembrane space (IMS) are transferred via the dinuclear copper A center (CU(A)) of subunit 2 and heme A of subunit 1 to the active site in subunit 1, a binuclear center (BNC) formed by heme A3 and copper B (CU(B)). The BNC reduces molecular oxygen to 2 water molecules using 4 electrons from cytochrome c in the IMS and 4 protons from the mitochondrial matrix. In Zancudomyces culisetae (Gut fungus), this protein is Cytochrome c oxidase subunit 2.